Consider the following 490-residue polypeptide: Tryptophan 5-hydroxylase 2 (490 aa).

Residue serine 19 is modified to Phosphoserine. The disordered stretch occupies residues 34–62 (LTLNKANSGKNDDKGNKGSSKNETATESG). The segment covering 50–62 (KGSSKNETATESG) has biased composition (polar residues). One can recognise an ACT domain in the interval 65–140 (AVVFSLKNEV…TIVTLNPPEN (76 aa)). Fe cation-binding residues include histidine 318, histidine 323, and glutamate 363.

It belongs to the biopterin-dependent aromatic amino acid hydroxylase family. As to quaternary structure, interacts with DNAJC12. Fe(2+) is required as a cofactor.

The enzyme catalyses (6R)-L-erythro-5,6,7,8-tetrahydrobiopterin + L-tryptophan + O2 = 5-hydroxy-L-tryptophan + (4aS,6R)-4a-hydroxy-L-erythro-5,6,7,8-tetrahydrobiopterin. It participates in aromatic compound metabolism; serotonin biosynthesis; serotonin from L-tryptophan: step 1/2. This chain is Tryptophan 5-hydroxylase 2 (TPH2), found in Macaca mulatta (Rhesus macaque).